A 279-amino-acid chain; its full sequence is Energy-coupling factor transporter ATP-binding protein EcfA (279 aa).

The region spanning 5 to 240 (IELEKINYKY…GPELIDLGLD (236 aa)) is the ABC transporter domain. 40-47 (GHNGSGKS) provides a ligand contact to ATP.

This sequence belongs to the ABC transporter superfamily. Energy-coupling factor EcfA family. As to quaternary structure, forms a stable energy-coupling factor (ECF) transporter complex composed of 2 membrane-embedded substrate-binding proteins (S component), 2 ATP-binding proteins (A component) and 2 transmembrane proteins (T component).

It localises to the cell membrane. Functionally, ATP-binding (A) component of a common energy-coupling factor (ECF) ABC-transporter complex. Unlike classic ABC transporters this ECF transporter provides the energy necessary to transport a number of different substrates. The protein is Energy-coupling factor transporter ATP-binding protein EcfA of Enterococcus faecium (Streptococcus faecium).